Reading from the N-terminus, the 140-residue chain is Short-chain diamines transporter (140 aa).

Transmembrane regions (helical) follow at residues 7–27 (IFHAVLFELMALAIIVPAAAL), 36–56 (LALVGIGLSLYTVVWNYIYNL), 79–99 (VGFEGGLIFISIPVIAWFLEI), and 105–125 (LMLEAGFLVFFLFYATGFNWL).

It belongs to the proteobacterial antimicrobial compound efflux (PACE) (TC 2.A.117) family.

It localises to the cell inner membrane. Functionally, mediates the efflux of short-chain diamines when energized by an electrochemical gradient. Confers resistance to chlorhexidine, benzalkonium, proflavine and acriflavine. Mediates efflux of both proflavine and acriflavine via an energy-dependent mechanism. The chain is Short-chain diamines transporter from Vibrio parahaemolyticus serotype O3:K6 (strain RIMD 2210633).